Here is a 425-residue protein sequence, read N- to C-terminus: MVGYIGDIHISESDAEVAECLSAEYKRQNTSLQMIASENFVSRAVLQAQGSVLTNKYAEGYPGSRYYCGCSEVDVAETLAVERLCKLFGCKYANVQPHSGSQANQQVYMALLKPGDTVLGMSLDSGGHLTHGAGPNVSGKWFNAVPYNVRRDTNLLDMGEIEEIALRVKPNLIIAGASSYPRRIDFKAFRAIADKVGAYFLADIAHYSGLIAGGQYPTPFGYAHVVTSTTHKTLRGPRGGVIMTDDEEIHKKLRSAVFPGMQGGALMHVIAAKAVAFREAMSPDFKVYVSQILDNSRALAAVLATGGLDVVTGGTDSHMVVVDLRSKGLTGRDVSSSLERAGIVCNKNAVPFDTEKPWVTSGIRLGAAAETSRGLVVKDFEKIGQLVLKIVDSMRAGADMSVVESGVREEVATLVRVVPYDTLAC.

Residues Leu-123 and 127 to 129 (GHL) contribute to the (6S)-5,6,7,8-tetrahydrofolate site. Lys-232 is subject to N6-(pyridoxal phosphate)lysine. (6S)-5,6,7,8-tetrahydrofolate is bound at residue Glu-248.

Belongs to the SHMT family. In terms of assembly, homodimer. Pyridoxal 5'-phosphate is required as a cofactor.

Its subcellular location is the cytoplasm. The catalysed reaction is (6R)-5,10-methylene-5,6,7,8-tetrahydrofolate + glycine + H2O = (6S)-5,6,7,8-tetrahydrofolate + L-serine. It functions in the pathway one-carbon metabolism; tetrahydrofolate interconversion. Its pathway is amino-acid biosynthesis; glycine biosynthesis; glycine from L-serine: step 1/1. In terms of biological role, catalyzes the reversible interconversion of serine and glycine with tetrahydrofolate (THF) serving as the one-carbon carrier. This reaction serves as the major source of one-carbon groups required for the biosynthesis of purines, thymidylate, methionine, and other important biomolecules. Also exhibits THF-independent aldolase activity toward beta-hydroxyamino acids, producing glycine and aldehydes, via a retro-aldol mechanism. This chain is Serine hydroxymethyltransferase, found in Anaplasma phagocytophilum (strain HZ).